The primary structure comprises 443 residues: D-alanyl-D-alanine carboxypeptidase DacA (443 aa).

The first 31 residues, Met1–Ala31, serve as a signal peptide directing secretion. The Acyl-ester intermediate role is filled by Ser67. Lys70 serves as the catalytic Proton acceptor. Ser131 is a catalytic residue. Lys258 provides a ligand contact to substrate.

Belongs to the peptidase S11 family.

Its subcellular location is the secreted. It is found in the cell wall. The protein localises to the cell membrane. The protein resides in the membrane raft. It catalyses the reaction Preferential cleavage: (Ac)2-L-Lys-D-Ala-|-D-Ala. Also transpeptidation of peptidyl-alanyl moieties that are N-acyl substituents of D-alanine.. Its pathway is cell wall biogenesis; peptidoglycan biosynthesis. In terms of biological role, removes C-terminal D-alanyl residues from sugar-peptide cell wall precursors. The polypeptide is D-alanyl-D-alanine carboxypeptidase DacA (dacA) (Bacillus subtilis (strain 168)).